We begin with the raw amino-acid sequence, 543 residues long: CTP synthase (543 aa).

The interval 1–266 (MKTNYIFVTG…DDYICERFSL (266 aa)) is amidoligase domain. Serine 14 serves as a coordination point for CTP. A UTP-binding site is contributed by serine 14. ATP contacts are provided by residues 15-20 (SLGKGI) and aspartate 72. Aspartate 72 and glutamate 140 together coordinate Mg(2+). CTP is bound by residues 147–149 (DIE), 187–192 (KTKPTQ), and lysine 223. UTP-binding positions include 187–192 (KTKPTQ) and lysine 223. Residue 239–241 (KDV) coordinates ATP. In terms of domain architecture, Glutamine amidotransferase type-1 spans 291 to 538 (TVGIVGKYID…IKAASEYQKK (248 aa)). Glycine 352 contacts L-glutamine. Cysteine 379 acts as the Nucleophile; for glutamine hydrolysis in catalysis. Residues 380 to 383 (LGMQ), glutamate 403, and arginine 466 contribute to the L-glutamine site. Active-site residues include histidine 511 and glutamate 513.

This sequence belongs to the CTP synthase family. In terms of assembly, homotetramer.

It carries out the reaction UTP + L-glutamine + ATP + H2O = CTP + L-glutamate + ADP + phosphate + 2 H(+). The enzyme catalyses L-glutamine + H2O = L-glutamate + NH4(+). The catalysed reaction is UTP + NH4(+) + ATP = CTP + ADP + phosphate + 2 H(+). Its pathway is pyrimidine metabolism; CTP biosynthesis via de novo pathway; CTP from UDP: step 2/2. With respect to regulation, allosterically activated by GTP, when glutamine is the substrate; GTP has no effect on the reaction when ammonia is the substrate. The allosteric effector GTP functions by stabilizing the protein conformation that binds the tetrahedral intermediate(s) formed during glutamine hydrolysis. Inhibited by the product CTP, via allosteric rather than competitive inhibition. In terms of biological role, catalyzes the ATP-dependent amination of UTP to CTP with either L-glutamine or ammonia as the source of nitrogen. Regulates intracellular CTP levels through interactions with the four ribonucleotide triphosphates. The sequence is that of CTP synthase from Baumannia cicadellinicola subsp. Homalodisca coagulata.